A 501-amino-acid polypeptide reads, in one-letter code: Protein MGF 505-4R (501 aa).

It belongs to the asfivirus MGF 505 family.

In terms of biological role, plays a role in virus cell tropism, and may be required for efficient virus replication in macrophages. This African swine fever virus (isolate Tick/South Africa/Pretoriuskop Pr4/1996) (ASFV) protein is Protein MGF 505-4R.